A 513-amino-acid polypeptide reads, in one-letter code: Membrane-bound transcription factor site-2 protease homolog (513 aa).

Residues 1-60 (MEISGRRMRRFRMRFRRDHLTGGENIENEASCCYCDLKISNFNEPIFRLGRRFSGVLKVW) lie on the Cytoplasmic side of the membrane. The chain crosses the membrane as a helical span at residues 61–81 (FSIGLGFGVASLILVTVFLLL). Over 82 to 107 (QFHSNPLFSNRLTSAVFGFSPSTRVS) the chain is Lumenal. Residues 108–128 (LSGIAYVLVSTVITVSVHELG) form a helical membrane-spanning segment. His-125 is a Zn(2+) binding site. Glu-126 is a catalytic residue. His-129 contributes to the Zn(2+) binding site. Topologically, residues 129–137 (HALAAASEG) are cytoplasmic. The chain crosses the membrane as a helical span at residues 138–158 (IQMEYIAVFIAAIFPGGLVAF). At 159–182 (DNDVLQSLPSFNALRIYCAGIWHN) the chain is on the lumenal side. Residues 183-203 (AVFCALCVFALFLLPVMLSPF) traverse the membrane as a helical segment. Over 204 to 437 (YKHGESLTVV…KSFPNILERS (234 aa)) the chain is Cytoplasmic. Residues 438–458 (LTCTFHVSLALVLLNSLPVYY) form a helical membrane-spanning segment. Residues 459–485 (LDGESILESSLQSFTWLSPRKKKKALQ) are Lumenal-facing. The helical transmembrane segment at 486–506 (VCLVGGSLLSFLAFFRIFLLG) threads the bilayer. Residues 507–513 (LPLSRRW) are Cytoplasmic-facing.

This sequence belongs to the peptidase M50A family. Zn(2+) serves as cofactor. As to expression, expressed in the vasculature of roots, cotyledons and leaves.

The protein resides in the golgi apparatus membrane. Metalloprotease that catalyzes the second step (site-2 cleavage) in the proteolytic activation of various factors, after site-1 cleavage. Part of a regulated intramembrane proteolysis (RIP) cascade. After ER stress, cleaves BZIP17 and BZIP28 proteins which function as stress sensors and transducers in ER stress signaling pathway. The N-terminal bZIP component is translocated to the nucleus, where it activates the expression and production of ER chaperones, as well as proteins involved in brassinosteroid (BR) signaling, which is required for stress acclimation and growth. The polypeptide is Membrane-bound transcription factor site-2 protease homolog (S2P) (Arabidopsis thaliana (Mouse-ear cress)).